We begin with the raw amino-acid sequence, 371 residues long: Anhydro-N-acetylmuramic acid kinase (371 aa).

ATP is bound at residue 12-20; the sequence is GTVLDGNID.

The protein belongs to the anhydro-N-acetylmuramic acid kinase family.

It carries out the reaction 1,6-anhydro-N-acetyl-beta-muramate + ATP + H2O = N-acetyl-D-muramate 6-phosphate + ADP + H(+). It functions in the pathway amino-sugar metabolism; 1,6-anhydro-N-acetylmuramate degradation. The protein operates within cell wall biogenesis; peptidoglycan recycling. Catalyzes the specific phosphorylation of 1,6-anhydro-N-acetylmuramic acid (anhMurNAc) with the simultaneous cleavage of the 1,6-anhydro ring, generating MurNAc-6-P. Is required for the utilization of anhMurNAc either imported from the medium or derived from its own cell wall murein, and thus plays a role in cell wall recycling. This is Anhydro-N-acetylmuramic acid kinase from Brucella anthropi (strain ATCC 49188 / DSM 6882 / CCUG 24695 / JCM 21032 / LMG 3331 / NBRC 15819 / NCTC 12168 / Alc 37) (Ochrobactrum anthropi).